A 170-amino-acid chain; its full sequence is Protein Rex (170 aa).

The segment covering 1-16 has biased composition (basic residues); that stretch reads MPKTRRQRTRRARRNR. 2 disordered regions span residues 1-27 and 69-170; these read MPKT…SQDL and VQST…GEKP. The short motif at 2-19 is the Nuclear localization signal, and RNA-binding (RxRE) element; that stretch reads PKTRRQRTRRARRNRPPT. The homomultimerization stretch occupies residues 57–71; sequence PPAYIDMPSWPPVQS. A compositionally biased stretch (low complexity) spans 82-95; that stretch reads ALSALLSNTLSLAS. The Nuclear export signal motif lies at 83 to 94; it reads LSALLSNTLSLA. A homomultimerization region spans residues 124 to 132; the sequence is PSFNQCEST. Residues 143–160 are compositionally biased toward low complexity; that stretch reads PSGISSPPSPSPNLASVP. 2 positions are modified to phosphoserine; by host: S151 and S153. Residues 161-170 show a composition bias toward polar residues; the sequence is KTSTPPGEKP.

The protein belongs to the deltaretrovirus Rex protein family. Homomultimer. Phosphorylation is essential for RNA-binding and function.

The protein resides in the host nucleus. Its subcellular location is the host nucleolus. The protein localises to the host cytoplasm. Rex escorts unspliced gag-pro-pol and singly spliced env mRNAs out of the nucleus of infected cells. These mRNAs carry a recognition sequence called Rex responsive element (RxRE or XRE) located at the 3' region of the long terminal repeat (LTR). This function is essential since most HTLV proteins are translated from unspliced or partially spliced pre-mRNAs that cannot exit the nucleus by the pathway used by fully processed cellular mRNAs. The chain is Protein Rex from Human T-cell leukemia virus 2 (HTLV-2).